Here is a 463-residue protein sequence, read N- to C-terminus: L-seryl-tRNA(Sec) selenium transferase (463 aa).

An N6-(pyridoxal phosphate)lysine modification is found at Lys-295.

The protein belongs to the SelA family. In terms of assembly, homodecamer; pentamer of dimers. Binds only one seryl-tRNA(Sec) per dimer. Requires pyridoxal 5'-phosphate as cofactor.

The protein localises to the cytoplasm. The enzyme catalyses L-seryl-tRNA(Sec) + selenophosphate + H(+) = L-selenocysteinyl-tRNA(Sec) + phosphate. It participates in aminoacyl-tRNA biosynthesis; selenocysteinyl-tRNA(Sec) biosynthesis; selenocysteinyl-tRNA(Sec) from L-seryl-tRNA(Sec) (bacterial route): step 1/1. Its function is as follows. Converts seryl-tRNA(Sec) to selenocysteinyl-tRNA(Sec) required for selenoprotein biosynthesis. In Salmonella enteritidis PT4 (strain P125109), this protein is L-seryl-tRNA(Sec) selenium transferase.